A 292-amino-acid chain; its full sequence is NAD kinase (292 aa).

Catalysis depends on D73, which acts as the Proton acceptor. NAD(+) contacts are provided by residues 73 to 74, 147 to 148, H158, R175, D177, 188 to 193, and Q247; these read DG, NE, and TAYSLS.

It belongs to the NAD kinase family. The cofactor is a divalent metal cation.

The protein localises to the cytoplasm. It catalyses the reaction NAD(+) + ATP = ADP + NADP(+) + H(+). In terms of biological role, involved in the regulation of the intracellular balance of NAD and NADP, and is a key enzyme in the biosynthesis of NADP. Catalyzes specifically the phosphorylation on 2'-hydroxyl of the adenosine moiety of NAD to yield NADP. In Enterobacter sp. (strain 638), this protein is NAD kinase.